Here is a 63-residue protein sequence, read N- to C-terminus: MGRIRQTFIKRTGEELIEKFADKFTSDFEENKKAVEEVAMISTKTLRNRIAGYVTAKVKKMNA.

The protein belongs to the eukaryotic ribosomal protein eS17 family.

The sequence is that of Small ribosomal subunit protein eS17 from Methanococcus maripaludis (strain C6 / ATCC BAA-1332).